A 242-amino-acid polypeptide reads, in one-letter code: C-reactive protein 3.3 (242 aa).

The N-terminal stretch at 1 to 24 (MKTFHGPTCGTAVSLCLLLFLTSA) is a signal peptide. The 212-residue stretch at 30 to 241 (ITSKVKFPPS…GVVLSPNEIC (212 aa)) folds into the Pentraxin (PTX) domain. Positions 60 and 63 each coordinate phosphocholine. Disulfide bonds link cysteine 62-cysteine 125 and cysteine 112-cysteine 144. Residues aspartate 85 and asparagine 86 each contribute to the Ca(2+) site. Asparagine 147 is a glycosylation site (N-linked (GlcNAc...) asparagine). The Ca(2+) site is built by glutamine 169, aspartate 170, and glutamine 180. The cysteines at positions 207 and 241 are disulfide-linked.

It belongs to the pentraxin family. Homopentamer. Pentraxin (or pentaxin) have a discoid arrangement of 5 non-covalently bound subunits. Ca(2+) serves as cofactor.

Its subcellular location is the secreted. Functionally, might serve the role of immunoglobulins. The sequence is that of C-reactive protein 3.3 from Limulus polyphemus (Atlantic horseshoe crab).